The following is a 216-amino-acid chain: Ribonuclease T (216 aa).

The region spanning 28–202 (VVVDVETGGF…YDTEQTARLF (175 aa)) is the Exonuclease domain. The Mg(2+) site is built by D31, E33, H189, and D194. The active-site Proton donor/acceptor is H189.

The protein belongs to the RNase T family. Homodimer. The cofactor is Mg(2+).

Functionally, trims short 3' overhangs of a variety of RNA species, leaving a one or two nucleotide 3' overhang. Responsible for the end-turnover of tRNA: specifically removes the terminal AMP residue from uncharged tRNA (tRNA-C-C-A). Also appears to be involved in tRNA biosynthesis. The protein is Ribonuclease T of Xanthomonas campestris pv. campestris (strain 8004).